The primary structure comprises 429 residues: Ribosomal RNA small subunit methyltransferase B (429 aa).

Residues 254–260 (CAAPGGK), aspartate 277, aspartate 303, and aspartate 322 each bind S-adenosyl-L-methionine. The Nucleophile role is filled by cysteine 375.

The protein belongs to the class I-like SAM-binding methyltransferase superfamily. RsmB/NOP family.

The protein resides in the cytoplasm. It carries out the reaction cytidine(967) in 16S rRNA + S-adenosyl-L-methionine = 5-methylcytidine(967) in 16S rRNA + S-adenosyl-L-homocysteine + H(+). Its function is as follows. Specifically methylates the cytosine at position 967 (m5C967) of 16S rRNA. The protein is Ribosomal RNA small subunit methyltransferase B of Cronobacter sakazakii (strain ATCC BAA-894) (Enterobacter sakazakii).